A 134-amino-acid polypeptide reads, in one-letter code: MAYSSCLNRSLKPNKLLLRRIDGAIQVRSHVDRTFYSLVGSGRSGGGPPRLLSSRESIHPLSVYGELSLEHRLRFVLNGKMEHLTTHLHRPRTTRSPLSFWGDGGIVPFEPFFHAFPGGLEKAVINRTSLILPS.

This sequence belongs to the ycf68 family.

Its subcellular location is the plastid. It is found in the chloroplast. This is an uncharacterized protein from Saccharum hybrid (Sugarcane).